Here is a 255-residue protein sequence, read N- to C-terminus: Proteasome subunit alpha (255 aa).

The protein belongs to the peptidase T1A family. The 20S proteasome core is composed of 14 alpha and 14 beta subunits that assemble into four stacked heptameric rings, resulting in a barrel-shaped structure. The two inner rings, each composed of seven catalytic beta subunits, are sandwiched by two outer rings, each composed of seven alpha subunits. The catalytic chamber with the active sites is on the inside of the barrel. Has a gated structure, the ends of the cylinder being occluded by the N-termini of the alpha-subunits. Is capped at one or both ends by the proteasome regulatory ATPase, PAN.

The protein resides in the cytoplasm. Its activity is regulated as follows. The formation of the proteasomal ATPase PAN-20S proteasome complex, via the docking of the C-termini of PAN into the intersubunit pockets in the alpha-rings, triggers opening of the gate for substrate entry. Interconversion between the open-gate and close-gate conformations leads to a dynamic regulation of the 20S proteasome proteolysis activity. Functionally, component of the proteasome core, a large protease complex with broad specificity involved in protein degradation. The sequence is that of Proteasome subunit alpha from Natronomonas pharaonis (strain ATCC 35678 / DSM 2160 / CIP 103997 / JCM 8858 / NBRC 14720 / NCIMB 2260 / Gabara) (Halobacterium pharaonis).